Reading from the N-terminus, the 1377-residue chain is MASGRDERPPWRLGRLRLLPPPPLLLLLLLLRSSAQAAHIKKAEATTTTVGGSEAAEGQFDHYYHEAALGEALEAAAAAGPPGLARLFSIGSSVEGRPLWVLRLTAGLGPPPTAAAGLDAAGPLLPGRPQVKLVGNMHGDETVSRQVLVYLARELASGYRRGDPRLVRLLNTTDVYLLPSLNPDGFERAREGDCGLGDSGPPGTSGRDNSRGRDLNRSFPDQFSTGEPPSLDEVPEVRALIDWIRRNKFVLSGNLHGGSVVASYPFDDSPEHKTTGLYSKTSDDEVFRYLAKAYASNHPIMKTGEPHCPGDEDETFKDGITNGAHWYDVEGGMQDYNYVWANCFEITLELSCCKYPPASQLRQEWENNRESLITLIEKVHIGIKGFVKDSVTGSGLENATISVAGINHNITTGRFGDFHRLLVPGTYNLTALSTGYMPLTINNIMVKEGPATEMDFSLRPTVMSVMPGSTEAVTTPGTVAVPNIPPGTPSSHQPIQPKDFHHHHFPDMEIFLRRFANEYPNITRLYSLGKSVESRELYVMEISDNPGVHEPGEPEFKYIGNMHGNEVVGRELLLNLIEYLCKNFGTDPEVTDLVRSTRIHLMPSMNPDGYEKSQEGDSISVVGRNNSNNFDLNRNFPDQFVPITEPTQPETIAVMSWVKAYPFVLSANLHGGSLVVNYPYDDNEQGVATYSKSPDDAVFQQIALSYSKENSQMFQGRPCKDMYLNEYFPHGITNGASWYNVPGGMQDWNYLQTNCFEVTIELGCVKYPFENELPKYWEQNRRSLIQFMKQVHQGVKGFVLDATDGRGILNATLSVAEINHPVTTYKAGDYWRLLVPGTYKITASARGYNPVTKNVTVRSEGAVQVNFTLVRSSADANNESKKGRGHSTSTDDTSDPTSKEFEALIKHLSAENGLEGFMLSSSSDLALYRYHSYKDLSEFLRGLVMNYPHITNLTTLGQSVEYRHIWSLEISNKPNISEPEEPKIRFVAGIHGNAPVGTELLLALAEFLCLNYKRNPVVTQLVDRTRIVIVPSLNPDGRERAQEKDCTSKTGHTNAHGKDLDTDFTSNASQPETKAIIENLIQKQDFSLSIALDGGSVLVTYPYDKPVQTVENKETLKHLASLYANNHPSMHMGQPSCPNNSDENIPGGVMRGAEWHSHLGSMKDYSVTYGHCPEITVYTSCCYFPSAAQLPALWAENKKSLLSMLVEVHKGVHGLVKDKAGKPISKAVIVLNEGIKVYTKEGGYFHVLLAPGVHNINAIADGYQQQHTQVFVHHDAASSVVIVFDTDNRIFGLPRELVVTVSGATMSALILTACIIWCICSIKSNRHKDGFHRLRQHHDEYEDEIRMMSTGSKKSLLSHEFQDETDTEEETLYSSKH.

A signal peptide spans 1 to 37 (MASGRDERPPWRLGRLRLLPPPPLLLLLLLLRSSAQA). Residues 38 to 1296 (AHIKKAEATT…DNRIFGLPRE (1259 aa)) are Extracellular-facing. Residues 62–379 (HYYHEAALGE…ESLITLIEKV (318 aa)) form the Peptidase M14 1 domain. Residues His138 and Glu141 each coordinate Zn(2+). The Cell attachment site signature appears at 161-163 (RGD). N-linked (GlcNAc...) asparagine glycosylation is found at Asn171 and Asn216. The interval 188-231 (RAREGDCGLGDSGPPGTSGRDNSRGRDLNRSFPDQFSTGEPPSL) is disordered. His256 is a Zn(2+) binding site. The residue at position 264 (Tyr264) is a Phosphotyrosine. Ser269 is modified (phosphoserine). Residue Glu349 is the Proton donor/acceptor of the active site. Asn398, Asn409, Asn428, and Asn521 each carry an N-linked (GlcNAc...) asparagine glycan. The region spanning 501–791 (HHHHFPDMEI…RSLIQFMKQV (291 aa)) is the Peptidase M14 2 domain. Zn(2+) is bound by residues His563 and Glu566. Residue Asn625 is glycosylated (N-linked (GlcNAc...) asparagine). His670 is a Zn(2+) binding site. Glu761 serves as the catalytic Proton donor/acceptor. N-linked (GlcNAc...) asparagine glycosylation is found at Asn810, Asn854, Asn866, Asn878, Asn952, and Asn975. The tract at residues 874–898 (ADANNESKKGRGHSTSTDDTSDPTS) is disordered. A Peptidase M14 3 domain is found at 929 to 1208 (RYHSYKDLSE…KSLLSMLVEV (280 aa)). A compositionally biased stretch (basic and acidic residues) spans 1038–1047 (RERAQEKDCT). The segment at 1038-1064 (RERAQEKDCTSKTGHTNAHGKDLDTDF) is disordered. N-linked (GlcNAc...) asparagine glycosylation is found at Asn1067 and Asn1139. Residues 1297 to 1317 (LVVTVSGATMSALILTACIIW) form a helical membrane-spanning segment. 3 S-palmitoyl cysteine lipidation sites follow: Cys1314, Cys1318, and Cys1320. Residues 1318–1377 (CICSIKSNRHKDGFHRLRQHHDEYEDEIRMMSTGSKKSLLSHEFQDETDTEEETLYSSKH) are Cytoplasmic-facing. Phosphoserine is present on residues Ser1355 and Ser1358. Residues 1356–1377 (LLSHEFQDETDTEEETLYSSKH) form a disordered region. A phosphothreonine mark is found at Thr1365 and Thr1367.

The protein belongs to the peptidase M14 family. The cofactor is Zn(2+).

The protein localises to the cell membrane. The catalysed reaction is Releases C-terminal Arg and Lys from polypeptides.. The chain is Carboxypeptidase D (Cpd) from Mus musculus (Mouse).